A 404-amino-acid chain; its full sequence is Exodeoxyribonuclease 7 large subunit (404 aa).

It belongs to the XseA family. In terms of assembly, heterooligomer composed of large and small subunits.

It is found in the cytoplasm. It carries out the reaction Exonucleolytic cleavage in either 5'- to 3'- or 3'- to 5'-direction to yield nucleoside 5'-phosphates.. Functionally, bidirectionally degrades single-stranded DNA into large acid-insoluble oligonucleotides, which are then degraded further into small acid-soluble oligonucleotides. The polypeptide is Exodeoxyribonuclease 7 large subunit (Fusobacterium nucleatum subsp. nucleatum (strain ATCC 25586 / DSM 15643 / BCRC 10681 / CIP 101130 / JCM 8532 / KCTC 2640 / LMG 13131 / VPI 4355)).